The chain runs to 415 residues: Histidine--tRNA ligase (415 aa).

This sequence belongs to the class-II aminoacyl-tRNA synthetase family. As to quaternary structure, homodimer.

It is found in the cytoplasm. It catalyses the reaction tRNA(His) + L-histidine + ATP = L-histidyl-tRNA(His) + AMP + diphosphate + H(+). In Idiomarina loihiensis (strain ATCC BAA-735 / DSM 15497 / L2-TR), this protein is Histidine--tRNA ligase.